A 618-amino-acid chain; its full sequence is tRNA endonuclease vms-1 (618 aa).

The C2H2-type zinc-finger motif lies at 59–85 (DQCTTCNCPVDFGDRAVLLEHYQSLFH). A VLRF1 domain is found at 170–311 (RPFDCAIFLW…SDCWQRLQQV (142 aa)). Q213 is an active-site residue. ANK repeat units lie at residues 437–466 (NRSTFLHVSAANDARKCLKYFLEEVNCDSS) and 470–496 (GAGLPPYSSSANSDVKSIFIDYRVKNE). The disordered stretch occupies residues 502–539 (ARTHIPEPKKKVELTEEQEREQAERKKEKKARQKEKEK). Positions 505–515 (HIPEPKKKVEL) are enriched in basic and acidic residues. Residues 510-557 (KKKVELTEEQEREQAERKKEKKARQKEKEKLKKEIAKRDVEEMEERQK) adopt a coiled-coil conformation.

It belongs to the ANKZF1/VMS1 family. As to expression, in larval stages and in adults, expressed in intestinal cells, specific neurons in the head and the tail, and in the ventral nerve cord.

Its subcellular location is the cytoplasm. The protein resides in the mitochondrion. In terms of biological role, endonuclease that cleaves polypeptidyl-tRNAs downstream of the ribosome-associated quality control (RQC) pathway to release incompletely synthesized polypeptides for degradation. The RQC pathway disassembles aberrantly stalled translation complexes to recycle or degrade the constituent parts. Dispensable for viability and growth but is required for protection against oxidative stress and for wild-type life span. This Caenorhabditis elegans protein is tRNA endonuclease vms-1 (vms-1).